We begin with the raw amino-acid sequence, 96 residues long: uncharacterized protein (96 aa).

Residues M1–G30 form the signal peptide. At A31 to D54 the chain is on the extracellular side. A helical membrane pass occupies residues F55 to L75. At K76–K96 the chain is on the cytoplasmic side.

It is found in the membrane. This is an uncharacterized protein from Dictyostelium discoideum (Social amoeba).